A 147-amino-acid chain; its full sequence is Sec-independent protein translocase protein TatB (147 aa).

The chain crosses the membrane as a helical span at residues 2-22 (FDGIGFMELLLIGVLGLVVLG). Polar residues predominate over residues 85–97 (QLKQAAQSVNRPY). Residues 85–147 (QLKQAAQSVN…DTRSNPKANG (63 aa)) form a disordered region. Residues 113 to 133 (ASQSVSTEASPSASSAPTSES) are compositionally biased toward low complexity.

Belongs to the TatB family. In terms of assembly, the Tat system comprises two distinct complexes: a TatABC complex, containing multiple copies of TatA, TatB and TatC subunits, and a separate TatA complex, containing only TatA subunits. Substrates initially bind to the TatABC complex, which probably triggers association of the separate TatA complex to form the active translocon.

Its subcellular location is the cell inner membrane. In terms of biological role, part of the twin-arginine translocation (Tat) system that transports large folded proteins containing a characteristic twin-arginine motif in their signal peptide across membranes. Together with TatC, TatB is part of a receptor directly interacting with Tat signal peptides. TatB may form an oligomeric binding site that transiently accommodates folded Tat precursor proteins before their translocation. In Shewanella sp. (strain ANA-3), this protein is Sec-independent protein translocase protein TatB.